A 318-amino-acid chain; its full sequence is NADH-ubiquinone oxidoreductase chain 1 (318 aa).

The next 8 helical transmembrane spans lie at 2 to 22 (FMIN…FLTL), 70 to 90 (MFII…SPLP), 100 to 120 (LGVL…LWSG), 136 to 156 (VAQT…VLLM), 172 to 192 (LWLL…TLAE), 222 to 242 (LFFL…AILF), 253 to 273 (ELYT…FLWI), and 294 to 314 (LPLT…TASI).

Belongs to the complex I subunit 1 family. Core subunit of respiratory chain NADH dehydrogenase (Complex I) which is composed of 45 different subunits.

The protein localises to the mitochondrion inner membrane. It catalyses the reaction a ubiquinone + NADH + 5 H(+)(in) = a ubiquinol + NAD(+) + 4 H(+)(out). Its function is as follows. Core subunit of the mitochondrial membrane respiratory chain NADH dehydrogenase (Complex I) which catalyzes electron transfer from NADH through the respiratory chain, using ubiquinone as an electron acceptor. Essential for the catalytic activity and assembly of complex I. This is NADH-ubiquinone oxidoreductase chain 1 (MT-ND1) from Balaenoptera musculus (Blue whale).